Consider the following 297-residue polypeptide: TGF-beta receptor type-2 (297 aa).

Positions 1–23 (MGRGLLGGLWPLHVVLWTRIAST) are cleaved as a signal peptide. Residues 24–166 (IPPHVPKSVN…NPDLLLVIFQ (143 aa)) lie on the Extracellular side of the membrane. 6 disulfide bridges follow: Cys-51–Cys-84, Cys-54–Cys-71, Cys-61–Cys-67, Cys-77–Cys-101, Cys-121–Cys-136, and Cys-138–Cys-143. 2 N-linked (GlcNAc...) asparagine glycosylation sites follow: Asn-70 and Asn-94. The chain crosses the membrane as a helical span at residues 167–187 (VTGVSLLPPLGIAIAVIITFY). Over 188 to 297 (CYRVHRQQKL…KTEKDIFSDL (110 aa)) the chain is Cytoplasmic. The Protein kinase domain occupies 244–297 (IELDTLVGKGRFAEVYKAKLRQNTSEQFETVAVKIFPYEEYASWKTEKDIFSDL). Residues 250-258 (VGKGRFAEV) and Lys-277 contribute to the ATP site.

This sequence belongs to the protein kinase superfamily. TKL Ser/Thr protein kinase family. TGFB receptor subfamily. Homodimer. Heterohexamer; TGFB1, TGFB2 and TGFB3 homodimeric ligands assemble a functional receptor composed of two TGFBR1 and TGFBR2 heterodimers to form a ligand-receptor heterohexamer. The respective affinity of TGFRB1 and TGFRB2 for the ligands may modulate the kinetics of assembly of the receptor and may explain the different biological activities of TGFB1, TGFB2 and TGFB3. Component of a complex composed of TSC22D1 (via N-terminus), TGFBR1 and TGFBR2; the interaction between TSC22D1 and TGFBR1 is inhibited by SMAD7 and promoted by TGFB1. Interacts with DAXX. Interacts with DYNLT4. Interacts with ZFYVE9; ZFYVE9 recruits SMAD2 and SMAD3 to the TGF-beta receptor. Interacts with and is activated by SCUBE3; this interaction does not affect TGFB1-binding to TGFBR2. Interacts with VPS39; this interaction is independent of the receptor kinase activity and of the presence of TGF-beta. Interacts with CLU. It depends on Mg(2+) as a cofactor. Mn(2+) is required as a cofactor. Post-translationally, phosphorylated on a Ser/Thr residue in the cytoplasmic domain.

The protein resides in the cell membrane. Its subcellular location is the membrane raft. The catalysed reaction is L-threonyl-[receptor-protein] + ATP = O-phospho-L-threonyl-[receptor-protein] + ADP + H(+). It carries out the reaction L-seryl-[receptor-protein] + ATP = O-phospho-L-seryl-[receptor-protein] + ADP + H(+). Transmembrane serine/threonine kinase forming with the TGF-beta type I serine/threonine kinase receptor, TGFBR1, the non-promiscuous receptor for the TGF-beta cytokines TGFB1, TGFB2 and TGFB3. Transduces the TGFB1, TGFB2 and TGFB3 signal from the cell surface to the cytoplasm and is thus regulating a plethora of physiological and pathological processes including cell cycle arrest in epithelial and hematopoietic cells, control of mesenchymal cell proliferation and differentiation, wound healing, extracellular matrix production, immunosuppression and carcinogenesis. The formation of the receptor complex composed of 2 TGFBR1 and 2 TGFBR2 molecules symmetrically bound to the cytokine dimer results in the phosphorylation and the activation of TGFRB1 by the constitutively active TGFBR2. Activated TGFBR1 phosphorylates SMAD2 which dissociates from the receptor and interacts with SMAD4. The SMAD2-SMAD4 complex is subsequently translocated to the nucleus where it modulates the transcription of the TGF-beta-regulated genes. This constitutes the canonical SMAD-dependent TGF-beta signaling cascade. Also involved in non-canonical, SMAD-independent TGF-beta signaling pathways. This is TGF-beta receptor type-2 (TGFBR2) from Sus scrofa (Pig).